A 454-amino-acid polypeptide reads, in one-letter code: tRNA-2-methylthio-N(6)-dimethylallyladenosine synthase (454 aa).

In terms of domain architecture, MTTase N-terminal spans 11–128; it reads KKLYIQTHGC…LPEMIETPRE (118 aa). 6 residues coordinate [4Fe-4S] cluster: C20, C57, C91, C165, C169, and C172. Residues 151–382 form the Radical SAM core domain; that stretch reads EADGATAFVS…QTRIIQQAQE (232 aa). A TRAM domain is found at 385–449; the sequence is RRMVGNTERV…PNSLRGVLLG (65 aa).

This sequence belongs to the methylthiotransferase family. MiaB subfamily. As to quaternary structure, monomer. It depends on [4Fe-4S] cluster as a cofactor.

The protein resides in the cytoplasm. The enzyme catalyses N(6)-dimethylallyladenosine(37) in tRNA + (sulfur carrier)-SH + AH2 + 2 S-adenosyl-L-methionine = 2-methylsulfanyl-N(6)-dimethylallyladenosine(37) in tRNA + (sulfur carrier)-H + 5'-deoxyadenosine + L-methionine + A + S-adenosyl-L-homocysteine + 2 H(+). Catalyzes the methylthiolation of N6-(dimethylallyl)adenosine (i(6)A), leading to the formation of 2-methylthio-N6-(dimethylallyl)adenosine (ms(2)i(6)A) at position 37 in tRNAs that read codons beginning with uridine. This chain is tRNA-2-methylthio-N(6)-dimethylallyladenosine synthase, found in Saccharophagus degradans (strain 2-40 / ATCC 43961 / DSM 17024).